Reading from the N-terminus, the 297-residue chain is Chelated iron transport system membrane protein YfeD (297 aa).

Helical transmembrane passes span 20–40 (AIVAAIVTGVVCAILSCYLVL), 58–78 (IVLAFWLGIPLVIGAFVSGIF), 96–116 (TVMGIVFSGMFAFGLVLFSRI), 133–153 (ISLTELKQTLWIAGFTLLVVL), 172–192 (IGLPVKFLHYGLLCLLALTIV), 197–217 (AVGVILVIAMLIAPGIIAFMI), 224–244 (MLVVATLVSVVACVLGTLISF), and 248–268 (GATGPCIVIIQALFFVVALIY).

This sequence belongs to the ABC-3 integral membrane protein family.

The protein resides in the cell inner membrane. In terms of biological role, part of an ATP-driven transport system YfeABCD for chelated iron. This chain is Chelated iron transport system membrane protein YfeD (yfeD), found in Yersinia pestis.